Here is a 320-residue protein sequence, read N- to C-terminus: Cytochrome f (320 aa).

The first 35 residues, 1–35, serve as a signal peptide directing secretion; the sequence is MENRNTFSWVKEQMTRSISVSIMIYVITQTSISNA. Positions 36, 56, 59, and 60 each coordinate heme. A helical transmembrane segment spans residues 286-306; it reads VQGLLFFFASVILAQVFLVLK.

Belongs to the cytochrome f family. In terms of assembly, the 4 large subunits of the cytochrome b6-f complex are cytochrome b6, subunit IV (17 kDa polypeptide, petD), cytochrome f and the Rieske protein, while the 4 small subunits are PetG, PetL, PetM and PetN. The complex functions as a dimer. The cofactor is heme.

Its subcellular location is the plastid. It localises to the chloroplast thylakoid membrane. Functionally, component of the cytochrome b6-f complex, which mediates electron transfer between photosystem II (PSII) and photosystem I (PSI), cyclic electron flow around PSI, and state transitions. In Agrostis stolonifera (Creeping bentgrass), this protein is Cytochrome f.